We begin with the raw amino-acid sequence, 310 residues long: MDPQNYSLVSEFVLHGLCTSRHLQNFFFIFFFGVYVAIMLGNLLILVTVISDPCLHSSPMYFLLGNLAFLDMWLASFATPKMIRDFLSDQKLISFGGCMAQIFFLHFTGGAEMVLLVSMAYDRYVAICKPLHYMTLMSWQTCIRLVLASWVVGFVHSISQVAFTVNLPYCGPNEVDSFFCDLPLVIKLACMDTYVLGIIMISDSGLLSLSCFLLLLISYTVILLAIRQRAAGSTSKALSTCSAHIMVVTLFFGPCIFVYVRPFSRFSVDKLLSVFYTIFTPLLNPIIYTLRNEEMKAAMKKLQNRRVTFQ.

At 1–25 (MDPQNYSLVSEFVLHGLCTSRHLQN) the chain is on the extracellular side. The N-linked (GlcNAc...) asparagine glycan is linked to asparagine 5. A helical transmembrane segment spans residues 26 to 49 (FFFIFFFGVYVAIMLGNLLILVTV). Residues 50–58 (ISDPCLHSS) lie on the Cytoplasmic side of the membrane. Residues 59–80 (PMYFLLGNLAFLDMWLASFATP) traverse the membrane as a helical segment. Residues 81–101 (KMIRDFLSDQKLISFGGCMAQ) lie on the Extracellular side of the membrane. A disulfide bridge links cysteine 98 with cysteine 190. Residues 102–121 (IFFLHFTGGAEMVLLVSMAY) form a helical membrane-spanning segment. Residues 122–140 (DRYVAICKPLHYMTLMSWQ) are Cytoplasmic-facing. Residues 141–159 (TCIRLVLASWVVGFVHSIS) traverse the membrane as a helical segment. Topologically, residues 160–196 (QVAFTVNLPYCGPNEVDSFFCDLPLVIKLACMDTYVL) are extracellular. Residues 197-220 (GIIMISDSGLLSLSCFLLLLISYT) form a helical membrane-spanning segment. At 221–236 (VILLAIRQRAAGSTSK) the chain is on the cytoplasmic side. A helical transmembrane segment spans residues 237–259 (ALSTCSAHIMVVTLFFGPCIFVY). Topologically, residues 260-270 (VRPFSRFSVDK) are extracellular. Residues 271–290 (LLSVFYTIFTPLLNPIIYTL) traverse the membrane as a helical segment. The Cytoplasmic portion of the chain corresponds to 291–310 (RNEEMKAAMKKLQNRRVTFQ).

It belongs to the G-protein coupled receptor 1 family.

The protein localises to the cell membrane. Functionally, odorant receptor. The sequence is that of Olfactory receptor 4K14 (OR4K14) from Homo sapiens (Human).